Here is a 161-residue protein sequence, read N- to C-terminus: Ribosome maturation factor RimP (161 aa).

This sequence belongs to the RimP family.

Its subcellular location is the cytoplasm. Required for maturation of 30S ribosomal subunits. The sequence is that of Ribosome maturation factor RimP from Myxococcus xanthus (strain DK1622).